The following is a 99-amino-acid chain: Progonadoliberin-1 (99 aa).

A signal peptide spans 1–26 (MAAQTFALRLLLVGTLLGTLLGQGCC). Residue Gln27 is modified to Pyrrolidone carboxylic acid. Gly36 is modified (glycine amide).

Belongs to the GnRH family.

It is found in the secreted. Stimulates the secretion of gonadotropins. This chain is Progonadoliberin-1 (gnrh1), found in Dicentrarchus labrax (European seabass).